The sequence spans 507 residues: Iroquois-class homeodomain protein IRX-3 (507 aa).

Positions 19 to 39 are disordered; the sequence is RPGAAGGGGGGSSAGGRSGPG. The span at 22–39 shows a compositional bias: gly residues; sequence AAGGGGGGSSAGGRSGPG. The homeobox; TALE-type DNA-binding region spans 130-192; sequence DPSRPKNATR…NARRRLKKEN (63 aa). Disordered stretches follow at residues 193–398 and 416–468; these read KMTW…AAAA and RPFP…SGTD. Acidic residues-rich tracts occupy residues 213 to 223 and 230 to 261; these read REEEDEEEDEE and EMEE…DLEN. Composition is skewed to pro residues over residues 314 to 342 and 418 to 428; these read APPP…PAPA and FPGPPAGPRPH. Phosphoserine occurs at positions 326 and 329. A compositionally biased stretch (low complexity) spans 436 to 460; the sequence is APQHLLGLPGAAGHPAAAAAAYARP.

It belongs to the TALE/IRO homeobox family. Expressed by neural progenitor cells in discrete domains of the ventral neural tube. Also expressed in specific and overlapping patterns with Irx1 and Irx2 in the developing and adult metanephric kidney. In the adult metanephros, renal expression is confined to the S3 segment of the proximal tubule, in the loop of Henle.

The protein localises to the nucleus. Transcription factor involved in SHH-dependent neural patterning. Together with NKX2-2 and NKX6-1 acts to restrict the generation of motor neurons to the appropriate region of the neural tube. Belongs to the class I proteins of neuronal progenitor factors, which are repressed by SHH signals. Involved in the transcriptional repression of MNX1 in non-motor neuron cells. Acts as a regulator of energy metabolism. This chain is Iroquois-class homeodomain protein IRX-3 (Irx3), found in Mus musculus (Mouse).